A 491-amino-acid chain; its full sequence is Transcription factor unc-3 (491 aa).

Residues 66-69 (RKSN) form an interaction with DNA region. A C5-type zinc finger spans residues 154–173 (CRVLLTHEVMCSRCCEKKSC). Interaction with DNA stretches follow at residues 200–207 (NCLKNAGN) and 239–242 (NNSK). Residues 240-261 (NSKHGRRTKRTDASDDSEYSES) form a disordered region. The region spanning 269-355 (PVIKALFPSE…SRGTPLRFSY (87 aa)) is the IPT/TIG domain.

Belongs to the COE family. May homodimerise. Interacts with jmjd-3.1. May interact with GFI1 homolog pag-3.

It is found in the nucleus. In terms of biological role, transcription factor. Involved in motor neuron fate determination and maintenance, acting as an activator of gene expression in a subset of motor neurons. May act in concert with GFI1 homolog pag-3 in motor neuron fate determination. Required to maintain the expression of transcriptional repressors bnc-1 and cfi-1, which play roles in the cell fate of motor neurons. May play a role in the expression of proteins essential for axonal pathfinding and/or neuronal differentiation in both sensory and motor neurons. Cooperates with jmjd-3.1 and wdr-5.1 to ensure robust transdifferentiation of the Y rectal cell to the PDA motor neuron during larval development. This Caenorhabditis elegans protein is Transcription factor unc-3 (unc-3).